Reading from the N-terminus, the 20-residue chain is Maximin-Hu (20 aa).

This sequence belongs to the bombinin family. Expressed by the skin glands.

Its subcellular location is the secreted. Its function is as follows. Has antimicrobial activity. In Bombina maxima (Giant fire-bellied toad), this protein is Maximin-Hu.